The primary structure comprises 493 residues: Glutamyl-tRNA(Gln) amidotransferase subunit A (493 aa).

Residues lysine 78 and serine 158 each act as charge relay system in the active site. The active-site Acyl-ester intermediate is the serine 182.

The protein belongs to the amidase family. GatA subfamily. As to quaternary structure, heterotrimer of A, B and C subunits.

It carries out the reaction L-glutamyl-tRNA(Gln) + L-glutamine + ATP + H2O = L-glutaminyl-tRNA(Gln) + L-glutamate + ADP + phosphate + H(+). Its function is as follows. Allows the formation of correctly charged Gln-tRNA(Gln) through the transamidation of misacylated Glu-tRNA(Gln) in organisms which lack glutaminyl-tRNA synthetase. The reaction takes place in the presence of glutamine and ATP through an activated gamma-phospho-Glu-tRNA(Gln). The chain is Glutamyl-tRNA(Gln) amidotransferase subunit A from Methylorubrum populi (strain ATCC BAA-705 / NCIMB 13946 / BJ001) (Methylobacterium populi).